A 714-amino-acid chain; its full sequence is BBSome complex member bbs-2 (714 aa).

Coiled-coil stretches lie at residues 332 to 361 (IREF…VEKD) and 597 to 627 (MTEV…DSIA).

As to quaternary structure, part of BBSome complex, that contains at least bbs-1, bbs-2, bbs-4, bbs-5, osm-12, bbs-8/ttc-8 and bbs-9. As to expression, expressed in ciliated cells including amphid and both inner and outer labial neurons of the head and in both phasmid neurons PHA and PHB in the tail at larval stages L1 and L2.

It localises to the cell projection. Its subcellular location is the cilium. The protein localises to the cytoplasm. It is found in the cytoskeleton. The protein resides in the cilium basal body. It localises to the cilium axoneme. Its function is as follows. Component of the BBSome complex. The BBSome complex is thought to function as a coat complex required for sorting of specific membrane proteins to the primary cilia. The BBSome complex is required for ciliogenesis but is dispensable for centriolar satellite function. Required for proper BBSome complex assembly and its ciliary localization. Required for cilia biogenesis and both the assembly and movement of intraflagellar transport proteins along the ciliary axoneme. The polypeptide is BBSome complex member bbs-2 (Caenorhabditis elegans).